The sequence spans 541 residues: Carotenoid 9,10(9',10')-cleavage dioxygenase 1 (541 aa).

Fe cation-binding residues include histidine 222, histidine 270, histidine 336, and histidine 526.

Belongs to the carotenoid oxygenase family. The cofactor is Fe(2+).

The catalysed reaction is all-trans-zeaxanthin + 2 O2 = 4,9-dimethyldodeca-2,4,6,8,10-pentaenedial + 2 (3R)-hydroxy-beta-ionone. Its function is as follows. Cleaves a variety of carotenoids at the 9-10 and 9'-10' double bonds. Probably not involved in abscisic acid biosynthesis. This Pisum sativum (Garden pea) protein is Carotenoid 9,10(9',10')-cleavage dioxygenase 1 (CCD1).